We begin with the raw amino-acid sequence, 252 residues long: Ubiquinone biosynthesis protein COQ4 homolog 1, mitochondrial (252 aa).

4 residues coordinate Zn(2+): histidine 130, aspartate 131, histidine 134, and glutamate 146.

It belongs to the COQ4 family. In terms of assembly, component of a multi-subunit COQ enzyme complex. The cofactor is Zn(2+).

It is found in the mitochondrion inner membrane. The enzyme catalyses a 4-hydroxy-3-methoxy-5-(all-trans-polyprenyl)benzoate + H(+) = a 2-methoxy-6-(all-trans-polyprenyl)phenol + CO2. Its pathway is cofactor biosynthesis; ubiquinone biosynthesis. Functionally, lyase that catalyzes the C1-decarboxylation of 4-hydroxy-3-methoxy-5-(all-trans-polyprenyl)benzoic acid into 2-methoxy-6-(all-trans-polyprenyl)phenol during ubiquinone biosynthesis. The polypeptide is Ubiquinone biosynthesis protein COQ4 homolog 1, mitochondrial (Trypanosoma cruzi (strain CL Brener)).